We begin with the raw amino-acid sequence, 207 residues long: Nuclear transcription factor Y subunit beta (207 aa).

The tract at residues 1–52 (MTMDGDSSTTDASQLGISADYIGGSHYVIQPHDDTEDSMNDHEDTNGSKESF) is a domain. The tract at residues 27-52 (YVIQPHDDTEDSMNDHEDTNGSKESF) is disordered. Over residues 39–52 (MNDHEDTNGSKESF) the composition is skewed to basic and acidic residues. The b domain stretch occupies residues 53 to 142 (REQDIYLPIA…PLKLYLQKFR (90 aa)). The DNA-binding element occupies 59–65 (LPIANVA). The segment at 86 to 97 (VQECVSEFISFI) is subunit association domain (SAD). Lys140 is covalently cross-linked (Glycyl lysine isopeptide (Lys-Gly) (interchain with G-Cter in ubiquitin)). The interval 143-207 (EAMKGEKGIG…ISGVQQIQFS (65 aa)) is c domain.

The protein belongs to the NFYB/HAP3 subunit family. In terms of assembly, heterotrimeric transcription factor composed of three components, NF-YA, NF-YB and NF-YC. NF-YB and NF-YC must interact and dimerize for NF-YA association and DNA binding. Interacts with C1QBP. Post-translationally, monoubiquitination at Lys-140 plays an important role in transcriptional activation by allowing the deposition of histone H3 methylations as well as histone H2B monoubiquitination at 'Lys-121'.

It is found in the nucleus. In terms of biological role, component of the sequence-specific heterotrimeric transcription factor (NF-Y) which specifically recognizes a 5'-CCAAT-3' box motif found in the promoters of its target genes. NF-Y can function as both an activator and a repressor, depending on its interacting cofactors. In Bos taurus (Bovine), this protein is Nuclear transcription factor Y subunit beta (NFYB).